We begin with the raw amino-acid sequence, 621 residues long: Exonuclease 3'-5' domain-containing protein 2 (621 aa).

At 1–4 (MSRQ) the chain is on the mitochondrial intermembrane side. A helical transmembrane segment spans residues 5–25 (NLVALTVTTLLGVAVGGFVLW). Over 26–621 (KGIQRRRRSK…FGEDLPIQLS (596 aa)) the chain is Cytoplasmic. The disordered stretch occupies residues 34–68 (SKTSPVTQQPQQKVLGSRELPPPEDDQLHSSAPRS). Polar residues predominate over residues 36–47 (TSPVTQQPQQKV). Asp-108, Glu-110, and Asp-246 together coordinate a divalent metal cation. The 3'-5' exonuclease domain maps to 155 to 247 (ILADGTILKV…DQVIYAARDA (93 aa)). The disordered stretch occupies residues 299–343 (RLGEEVNGEATESQQKPRNKKSKMDGMVPGNHQGRDPRKHKRKPL).

Belongs to the EXD2 family. In terms of assembly, homodimer. Interacts with RBBP8, MRE11 and BRCA1. Mg(2+) serves as cofactor. Mn(2+) is required as a cofactor.

It localises to the mitochondrion outer membrane. The protein localises to the mitochondrion matrix. It is found in the nucleus. The protein resides in the chromosome. The enzyme catalyses Exonucleolytic cleavage in the 3'- to 5'-direction to yield nucleoside 5'-phosphates.. In terms of biological role, exonuclease that has both 3'-5' exoribonuclease and exodeoxyribonuclease activities, depending on the divalent metal cation used as cofactor. In presence of Mg(2+), only shows 3'-5' exoribonuclease activity, while it shows both exoribonuclease and exodeoxyribonuclease activities in presence of Mn(2+). Acts as an exoribonuclease in mitochondrion, possibly by regulating ATP production and mitochondrial translation. Also involved in the response to DNA damage. Acts as 3'-5' exodeoxyribonuclease for double-strand breaks resection and efficient homologous recombination. Plays a key role in controlling the initial steps of chromosomal break repair, it is recruited to chromatin in a damage-dependent manner and functionally interacts with the MRN complex to accelerate resection through its 3'-5' exonuclease activity, which efficiently processes double-stranded DNA substrates containing nicks. Also involved in response to replicative stress: recruited to stalled forks and is required to stabilize and restart stalled replication forks by restraining excessive fork regression, thereby suppressing their degradation. The protein is Exonuclease 3'-5' domain-containing protein 2 of Homo sapiens (Human).